A 265-amino-acid polypeptide reads, in one-letter code: Tryptophan 2,3-dioxygenase (265 aa).

Substrate contacts are provided by residues 38 to 42 (FIVVH) and R104. H223 is a binding site for heme. T237 serves as a coordination point for substrate.

This sequence belongs to the tryptophan 2,3-dioxygenase family. In terms of assembly, homotetramer. The cofactor is heme.

It carries out the reaction L-tryptophan + O2 = N-formyl-L-kynurenine. Its pathway is amino-acid degradation; L-tryptophan degradation via kynurenine pathway; L-kynurenine from L-tryptophan: step 1/2. Heme-dependent dioxygenase that catalyzes the oxidative cleavage of the L-tryptophan (L-Trp) pyrrole ring and converts L-tryptophan to N-formyl-L-kynurenine. Catalyzes the oxidative cleavage of the indole moiety. The chain is Tryptophan 2,3-dioxygenase from Anaeromyxobacter sp. (strain K).